Reading from the N-terminus, the 120-residue chain is Adenosylhomocysteinase (120 aa).

Asparagine 34 is an NAD(+) binding site.

It belongs to the adenosylhomocysteinase family. NAD(+) serves as cofactor.

The protein localises to the cytoplasm. The enzyme catalyses S-adenosyl-L-homocysteine + H2O = L-homocysteine + adenosine. It functions in the pathway amino-acid biosynthesis; L-homocysteine biosynthesis; L-homocysteine from S-adenosyl-L-homocysteine: step 1/1. In terms of biological role, may play a key role in the regulation of the intracellular concentration of adenosylhomocysteine. The sequence is that of Adenosylhomocysteinase (ahcY) from Streptomyces fradiae (Streptomyces roseoflavus).